A 265-amino-acid polypeptide reads, in one-letter code: Putative 2-amino-3,7-dideoxy-D-threo-hept-6-ulosonate synthase 2 (265 aa).

The active-site Proton acceptor is D27. 1-deoxy-D-threo-hexo-2,5-diulose 6-phosphate is bound by residues 27 to 31 (DHGVS) and 147 to 149 (YPR). Y147 functions as the Proton donor in the catalytic mechanism. The active-site Schiff-base intermediate with substrate is K177. 1-deoxy-D-threo-hexo-2,5-diulose 6-phosphate contacts are provided by residues 202–203 (GG) and 230–231 (GR).

It belongs to the DeoC/FbaB aldolase family. ADHS subfamily. In terms of assembly, homodecamer.

The catalysed reaction is 1-deoxy-D-threo-hexo-2,5-diulose 6-phosphate + L-aspartate 4-semialdehyde = 2,3-dioxopropyl phosphate + 2-amino-2,3,7-trideoxy-D-lyxo-hept-6-ulosonate. Its function is as follows. Catalyzes a transaldol reaction between 6-deoxy-5-ketofructose 1-phosphate (DKFP) and L-aspartate semialdehyde (ASA) with an elimination of hydroxypyruvaldehyde phosphate to yield 2-amino-3,7-dideoxy-D-threo-hept-6-ulosonate (ADH). Plays a key role in an alternative pathway of the biosynthesis of 3-dehydroquinate (DHQ), which is involved in the canonical pathway for the biosynthesis of aromatic amino acids. This chain is Putative 2-amino-3,7-dideoxy-D-threo-hept-6-ulosonate synthase 2, found in Archaeoglobus fulgidus (strain ATCC 49558 / DSM 4304 / JCM 9628 / NBRC 100126 / VC-16).